Consider the following 481-residue polypeptide: MGDVIVLYAAPGMGHIVSMVELGKLIVHRYGPHKFSITILYTCGSVVDTTSIPAYIRRISHSHPSISFCQFPRVTNKITPNISGAAIMFDFIRQNDPHVRRALQEISKSAAVRAFVIDLFCTSALPIGKEFNIPTYYFHTSGAAVLAAFLYFPKIDEQTTDSFKDLRDTVFEFPGWKSPLKAIHMVEPVLDRNDPAYSDMIYFCSHLPKSNGIVVNTFEELEPPTILQAIAGGLCVPDGPTPPVYYVGPLIDEEKELSNDAAAAEEEDCLSWLDKQPRRSVLFLCFGSRGSFPAVQLKEIANGLEASGQRFLWVVKKPPVEEKTKQVHGVDDFDLEAVLPEGFLERTADRGMVVKSWAPQVVVLKKESVGGFVTHCGWNSVLEAVVAGVPMIAWPLYAEQQMNRNVLVTDMEMAIGVEQRDEEDGFVNAEEVERRVRELMESEGGRLLRERCKKMGEMALAALGETGSSTRNLVNFVSSIT.

UDP-alpha-D-glucose contacts are provided by residues Ser-288, 357 to 358 (WA), 375 to 383 (HCGWNSVLE), and 397 to 400 (YAEQ).

This sequence belongs to the UDP-glycosyltransferase family.

In terms of biological role, glycosyltransferase that may possess chalcone and dihydrochalcone 2'-O-glucosyltransferase activity. This is UDP-glycosyltransferase 88F3 from Pyrus communis (Pear).